Reading from the N-terminus, the 485-residue chain is Eukaryotic translation initiation factor 3 subunit E (485 aa).

The PCI domain maps to 219–391; the sequence is NQPDGPDGIV…GEIHITKPVT (173 aa). Residues 444 to 485 form a disordered region; sequence QGGGKSNKKGDYKKGDYKKGGDFKKGGDFKKGGDHKKRAWVK. The span at 451–475 shows a compositional bias: basic and acidic residues; it reads KKGDYKKGDYKKGGDFKKGGDFKKG. Basic residues predominate over residues 476–485; the sequence is GDHKKRAWVK.

The protein belongs to the eIF-3 subunit E family. As to quaternary structure, component of the eukaryotic translation initiation factor 3 (eIF-3) complex.

It is found in the cytoplasm. In terms of biological role, component of the eukaryotic translation initiation factor 3 (eIF-3) complex, which is involved in protein synthesis of a specialized repertoire of mRNAs and, together with other initiation factors, stimulates binding of mRNA and methionyl-tRNAi to the 40S ribosome. The eIF-3 complex specifically targets and initiates translation of a subset of mRNAs involved in cell proliferation. This Monosiga brevicollis (Choanoflagellate) protein is Eukaryotic translation initiation factor 3 subunit E.